The following is a 138-amino-acid chain: uncharacterized protein (138 aa).

The MsrB domain maps to 9-133 (EDEWKKELGP…NSASLEFHNE (125 aa)). Residues C49, C52, C97, and C100 each coordinate Zn(2+). C122 acts as the Nucleophile in catalysis.

This sequence belongs to the MsrB Met sulfoxide reductase family. Zn(2+) serves as cofactor.

It localises to the cytoplasm. The protein resides in the nucleus. This is an uncharacterized protein from Schizosaccharomyces pombe (strain 972 / ATCC 24843) (Fission yeast).